Here is a 308-residue protein sequence, read N- to C-terminus: GMP synthase [glutamine-hydrolyzing] subunit B (308 aa).

The 182-residue stretch at 2–183 folds into the GMPS ATP-PPase domain; it reads LNPSDFIEEA…LGLPREMIQR (182 aa). 29–35 contacts ATP; sequence SGGVDSS.

Heterodimer composed of a glutamine amidotransferase subunit (A) and a GMP-binding subunit (B).

It carries out the reaction XMP + L-glutamine + ATP + H2O = GMP + L-glutamate + AMP + diphosphate + 2 H(+). The protein operates within purine metabolism; GMP biosynthesis; GMP from XMP (L-Gln route): step 1/1. Functionally, catalyzes the synthesis of GMP from XMP. This chain is GMP synthase [glutamine-hydrolyzing] subunit B (guaAB), found in Methanothermobacter thermautotrophicus (strain ATCC 29096 / DSM 1053 / JCM 10044 / NBRC 100330 / Delta H) (Methanobacterium thermoautotrophicum).